The chain runs to 341 residues: MTTYKDAGVNIEEGYKAVNLIKNIAKETFDSNVITDIGSFGSMYLLNIENSDYILVSGTDGVGTKLKIAFYMDKHDTVGIDCVAMCVNDILCHGAKPLFFLDYIACGKLKSEKVATIVKGVAEGCKIAGCSLVGGETAEMPGFYREEEYDLAGFAVGLVKKDLAICGQDVKEGDILIGLASNGVHSNGYSLVRKVFGIDENPKVLTKVYEELNLSLGEELLKPTRIYVKPVLKVLEKIKIKGIAHITGGGFFENIPRAFPKGFVAVIEKGTWNILPIFRLIQKYSKVDDNEMFSTFNMGIGMVLIVSKDDVETAMEILNEEGINSYVIGTIEKGEGGVVLR.

This sequence belongs to the AIR synthase family.

It is found in the cytoplasm. It carries out the reaction 2-formamido-N(1)-(5-O-phospho-beta-D-ribosyl)acetamidine + ATP = 5-amino-1-(5-phospho-beta-D-ribosyl)imidazole + ADP + phosphate + H(+). It functions in the pathway purine metabolism; IMP biosynthesis via de novo pathway; 5-amino-1-(5-phospho-D-ribosyl)imidazole from N(2)-formyl-N(1)-(5-phospho-D-ribosyl)glycinamide: step 2/2. This chain is Phosphoribosylformylglycinamidine cyclo-ligase, found in Caldicellulosiruptor saccharolyticus (strain ATCC 43494 / DSM 8903 / Tp8T 6331).